The primary structure comprises 110 residues: Small ribosomal subunit protein bS16 (110 aa).

Residues 87–110 (ARNNPEKAVPRKERKAAAEAAAKK) form a disordered region.

It belongs to the bacterial ribosomal protein bS16 family.

This Rhodopseudomonas palustris (strain HaA2) protein is Small ribosomal subunit protein bS16.